The primary structure comprises 254 residues: Imidazole glycerol phosphate synthase subunit HisF (254 aa).

Active-site residues include D13 and D132.

Belongs to the HisA/HisF family. As to quaternary structure, heterodimer of HisH and HisF.

The protein localises to the cytoplasm. It carries out the reaction 5-[(5-phospho-1-deoxy-D-ribulos-1-ylimino)methylamino]-1-(5-phospho-beta-D-ribosyl)imidazole-4-carboxamide + L-glutamine = D-erythro-1-(imidazol-4-yl)glycerol 3-phosphate + 5-amino-1-(5-phospho-beta-D-ribosyl)imidazole-4-carboxamide + L-glutamate + H(+). Its pathway is amino-acid biosynthesis; L-histidine biosynthesis; L-histidine from 5-phospho-alpha-D-ribose 1-diphosphate: step 5/9. IGPS catalyzes the conversion of PRFAR and glutamine to IGP, AICAR and glutamate. The HisF subunit catalyzes the cyclization activity that produces IGP and AICAR from PRFAR using the ammonia provided by the HisH subunit. This chain is Imidazole glycerol phosphate synthase subunit HisF, found in Sulfurovum sp. (strain NBC37-1).